Here is a 158-residue protein sequence, read N- to C-terminus: MSSKEAEAQKGKQGWITPTVIPPEEWGSFRYRGKTLEELLNMPMDEFIKLLPARQRRSLKRGLKPEHRKLLEKIRKAKRLMAQGKKVTIKTHCRDMIILPEMVGLTIHVYNGITYIPVFISPWHIGHYLGEFALTTRIVQHGEPGLKATRSSLHIAAK.

Belongs to the universal ribosomal protein uS19 family.

Its function is as follows. Protein S19 forms a complex with S13 that binds strongly to the 16S ribosomal RNA. In Pyrobaculum calidifontis (strain DSM 21063 / JCM 11548 / VA1), this protein is Small ribosomal subunit protein uS19.